Here is a 179-residue protein sequence, read N- to C-terminus: Large ribosomal subunit protein uL5 (179 aa).

The protein belongs to the universal ribosomal protein uL5 family. Part of the 50S ribosomal subunit; part of the 5S rRNA/L5/L18/L25 subcomplex. Contacts the 5S rRNA and the P site tRNA. Forms a bridge to the 30S subunit in the 70S ribosome.

Functionally, this is one of the proteins that bind and probably mediate the attachment of the 5S RNA into the large ribosomal subunit, where it forms part of the central protuberance. In the 70S ribosome it contacts protein S13 of the 30S subunit (bridge B1b), connecting the 2 subunits; this bridge is implicated in subunit movement. Contacts the P site tRNA; the 5S rRNA and some of its associated proteins might help stabilize positioning of ribosome-bound tRNAs. The sequence is that of Large ribosomal subunit protein uL5 from Polaromonas naphthalenivorans (strain CJ2).